The primary structure comprises 140 residues: Nucleoside diphosphate kinase (140 aa).

The ATP site is built by K11, F59, R87, T93, R104, and N114. Residue H117 is the Pros-phosphohistidine intermediate of the active site.

Belongs to the NDK family. In terms of assembly, homotetramer. It depends on Mg(2+) as a cofactor.

The protein localises to the cytoplasm. The enzyme catalyses a 2'-deoxyribonucleoside 5'-diphosphate + ATP = a 2'-deoxyribonucleoside 5'-triphosphate + ADP. It catalyses the reaction a ribonucleoside 5'-diphosphate + ATP = a ribonucleoside 5'-triphosphate + ADP. Its function is as follows. Major role in the synthesis of nucleoside triphosphates other than ATP. The ATP gamma phosphate is transferred to the NDP beta phosphate via a ping-pong mechanism, using a phosphorylated active-site intermediate. The chain is Nucleoside diphosphate kinase from Rhizobium etli (strain CIAT 652).